The chain runs to 852 residues: Major vault protein (852 aa).

MVP repeat units lie at residues 2–54 (EDSI…IPPR), 55–109 (HYCV…VATA), 110–161 (LQVV…CWIN), 162–214 (AIVI…DVVN), 215–269 (AFIL…GQVE), 270–320 (VTTL…IQDT), 321–377 (YVLS…YRHA), 378–457 (IPLD…PTRV), and 458–520 (VTFR…LLGP).

The vault ribonucleoprotein particle is a huge (400 A x 670 A) cage structure of 12.9 MDa. It consists of a dimer of half-vaults, with each half-vault comprising 39 identical major vault protein (MVP) chains, PARP4 and one or more vault RNAs (vRNAs). As to expression, expression is highest in brain and enriched in the electric lobe. Closely associated with synaptic vesicles in the nerve terminals of the electric organ.

It localises to the cytoplasm. The protein localises to the nucleus. In terms of biological role, required for normal vault structure. Vaults are multi-subunit structures that may act as scaffolds for proteins involved in signal transduction. Vaults may also play a role in nucleo-cytoplasmic transport. This is Major vault protein (MVP) from Diplobatis ommata (Ocellated electric ray).